The sequence spans 953 residues: MVLSRLLRAGEGKLLKRLRRIAAHINELEDDVLALSDAELRAKTDEFKRRHTDGESLDELLPEAFAVAREGARRTLGQRHFDVQLMGGAALHLGQIAEMKTGEGKTLTCVLPAYLNAIAGRGVHVVTVNDYLAKRDADWMGRVHRFLGLEVGAIMADMTPEQRRHAYAADITYGTNNEFGFDYLRDNMAWSLADCVQRGHFFSIVDEVDSILIDEARTPLIISGPADQSSRWYQEFARLAPMLKKDQHYEVDERKRTVGVTEDGVTIIEDQLGIENLYEAANTPLVGYLNNALKAKELYKRDKDYIVRNGEVVIVDEFTGRILHGRRYNEGMHQAIEAKEGVEIKAENQTLATITLQNYFRLYEKLAGMTGTAETEAAEFNGTYKLGVVPIPTNRPMARADQPDLVYKSEVAKFEAVAEDIEEKHRKGQPVLVGTTSVERSEYLAKLLVKKGVPHNVLNAKYHQSEAAIIAEAGRKGAVTVATNMAGRGTDIVLGGNVDHLADAELRKRGLDPVDNREEYEAQWPAVVEKIKEQVEAEAEEVRELGGLYVLGTERHESRRIDNQLRGRSGRQGDPGESRFYLSLGDELMRRFNAAMVETVMTRLKVPDDVPIEHKMVTRAIRSAQTQVEQQNMEIRKNVLKYDEVMNQQRSVIYDERRRVLEGEDLQEQVRHMIRDVVTEYVNAATADGYAEDWDFEKLWSALKTLYPVSVSWEALVDSDEDLSKERLLEEVLADAEAAYAKREAEVDGKVGPGAMRELERRVVLSVLDRKWREHLYEMDYLKEGIGLRAMAQRDPLVEYRREGFDMFHAMLDALKEESVGFLFNVQVEAAEPEPAPEQPSVPVSVSRSAEPTPDLQAAAEAAAAQSQVRRAKPTSAGPALSQLPGSTTQAPSALRGKGLDAPEKQRLNYSGPTEQGGVQTTSESAGEQGNGTSTRRERRAAARAEAKKNKRR.

Residues Gln84, 102 to 106 (GEGKT), and Asp491 contribute to the ATP site. Residues 832–953 (EPEPAPEQPS…RAEAKKNKRR (122 aa)) form a disordered region. Residues 841–865 (SVPVSVSRSAEPTPDLQAAAEAAAA) show a composition bias toward low complexity. Residues 898–907 (KGLDAPEKQR) are compositionally biased toward basic and acidic residues. Positions 908 to 934 (LNYSGPTEQGGVQTTSESAGEQGNGTS) are enriched in polar residues. Positions 940 to 953 (RAAARAEAKKNKRR) are enriched in basic and acidic residues.

Belongs to the SecA family. In terms of assembly, monomer and homodimer. Part of the essential Sec protein translocation apparatus which comprises SecA, SecYEG and auxiliary proteins SecDF. Other proteins may also be involved.

The protein localises to the cell membrane. The protein resides in the cytoplasm. The enzyme catalyses ATP + H2O + cellular proteinSide 1 = ADP + phosphate + cellular proteinSide 2.. Functionally, part of the Sec protein translocase complex. Interacts with the SecYEG preprotein conducting channel. Has a central role in coupling the hydrolysis of ATP to the transfer of proteins into and across the cell membrane, serving as an ATP-driven molecular motor driving the stepwise translocation of polypeptide chains across the membrane. This chain is Protein translocase subunit SecA, found in Saccharopolyspora erythraea (strain ATCC 11635 / DSM 40517 / JCM 4748 / NBRC 13426 / NCIMB 8594 / NRRL 2338).